The chain runs to 876 residues: Valine--tRNA ligase (876 aa).

Positions Pro43–His53 match the 'HIGH' region motif. Residues Lys532–Ser536 carry the 'KMSKS' region motif. Position 535 (Lys535) interacts with ATP. 2 coiled-coil regions span residues Gly805 to Gly826 and Arg853 to Asn875.

This sequence belongs to the class-I aminoacyl-tRNA synthetase family. ValS type 1 subfamily. In terms of assembly, monomer.

Its subcellular location is the cytoplasm. It catalyses the reaction tRNA(Val) + L-valine + ATP = L-valyl-tRNA(Val) + AMP + diphosphate. Its function is as follows. Catalyzes the attachment of valine to tRNA(Val). As ValRS can inadvertently accommodate and process structurally similar amino acids such as threonine, to avoid such errors, it has a 'posttransfer' editing activity that hydrolyzes mischarged Thr-tRNA(Val) in a tRNA-dependent manner. This is Valine--tRNA ligase from Bacteroides fragilis (strain ATCC 25285 / DSM 2151 / CCUG 4856 / JCM 11019 / LMG 10263 / NCTC 9343 / Onslow / VPI 2553 / EN-2).